Here is a 1338-residue protein sequence, read N- to C-terminus: Thioester-containing protein 1 allele R1 (1338 aa).

Residues 1-21 form the signal peptide; the sequence is MWQFIRSRILTVIIFIGAAHG. N-linked (GlcNAc...) asparagine glycosylation is found at Asn68, Asn199, Asn242, Asn312, and Asn481. The may contain the cleavage site stretch occupies residues 580-609; it reads ENEFDIFHSLGLFARTLDDILFDSANEKTG. Asn637, Asn728, and Asn813 each carry an N-linked (GlcNAc...) asparagine glycan. Positions 859–862 form a cross-link, isoglutamyl cysteine thioester (Cys-Gln); sequence CGEQ. Asn919 and Asn1065 each carry an N-linked (GlcNAc...) asparagine glycan. 3 disulfide bridges follow: Cys1217/Cys1283, Cys1326/Cys1338, and Cys1329/Cys1334.

Heterodimer of a TEP1-N chain and an TEP1-C chain non-covalently linked. Forms a complex composed of TEP1-N and TEP1-C heterodimer, LRIM1 and APL1C; the interaction stabilizes TEP1-N and TEP1-C heterodimer, prevents its binding to tissues while circulating in the hemolymph and protects the thioester bond from hydrolysis. Mature TEP1 and to a lesser extent full-length TEP1 interact with SPCLIP1; the interaction is induced by microbial infection. In the hemolymph, the full-length protein is cleaved by an unknow protease into a 75kDa N-terminal (TEP1-N) chain and an 80kDa C-terminal (TEP1-C) chain which remain non-covalently linked. The TEP1-C chain contains the thioester bond which covalently binds to the pathogen surface. Cleavage is induced by bacterial infection or aseptic wound injury. During embryonic and pupal development, the cleaved form is the predominant form. Post-translationally, N-glycosylated.

Its subcellular location is the secreted. Functionally, plays an essential role in the innate immune response against bacteria, fungi and protozoa infection. After proteolytic cleavage, the protein C-terminus binds covalently through a thioester bond to the pathogen surface resulting in pathogen clearance either by melanization or lysis. Initiate the recruitment and activation of a cascade of proteases, mostly of CLIP-domain serine proteases, which leads to the proteolytic cleavage of the prophenoloxidase (PPO) into active phenoloxidase (PO), the rate-limiting enzyme in melanin biosynthesis. In response to parasite P.berghei-mediated infection, binds to and mediates killing of ookinetes, as they egress from midgut epithelial cells into the basal labyrinth, by both lysis and melanization. During bacterial infection, binds to both Gram-positive and Gram-negative bacteria but only promotes phagocytosis of Gram-negative bacteria. Promotes the accumulation of SPCLIP1 onto the surface of P.berghei ookinetes and bacterium E.coli which leads to the melanization of the pathogen. Recruits CLIPA2 to bacteria surface. In response to bacterial infection, required for periostial hemocyte aggregation, but not for the aggregation of sessile hemocytes in non-periostial regions. During the late stage of fungus B.bassiana-mediated infection, required for the initiation of hyphae melanization by binding to the surface of hyphae and recruiting prophenoloxidase PPO to them. Plays a role in male fertility by binding to defective sperm cells and promoting their removal during spermatogenesis. Its function is as follows. Binds to and mediates killing of parasite P.bergei ookinetes by lysis and melanization. Binds covalently through a thioester bond to the pathogen surface resulting in pathogen clearance. The sequence is that of Thioester-containing protein 1 allele R1 from Anopheles gambiae (African malaria mosquito).